Reading from the N-terminus, the 499-residue chain is Glycerol kinase (499 aa).

Thr13 serves as a coordination point for ADP. Residues Thr13, Thr14, and Ser15 each coordinate ATP. Position 13 (Thr13) interacts with sn-glycerol 3-phosphate. Arg17 is a binding site for ADP. 4 residues coordinate sn-glycerol 3-phosphate: Arg83, Glu84, Tyr135, and Asp245. Residues Arg83, Glu84, Tyr135, Asp245, and Gln246 each contribute to the glycerol site. ADP is bound by residues Thr267 and Gly310. Positions 267, 310, 314, and 411 each coordinate ATP. ADP-binding residues include Gly411 and Asn415.

The protein belongs to the FGGY kinase family.

It carries out the reaction glycerol + ATP = sn-glycerol 3-phosphate + ADP + H(+). The protein operates within polyol metabolism; glycerol degradation via glycerol kinase pathway; sn-glycerol 3-phosphate from glycerol: step 1/1. With respect to regulation, inhibited by fructose 1,6-bisphosphate (FBP). Key enzyme in the regulation of glycerol uptake and metabolism. Catalyzes the phosphorylation of glycerol to yield sn-glycerol 3-phosphate. The polypeptide is Glycerol kinase (Stenotrophomonas maltophilia (strain K279a)).